The sequence spans 759 residues: 1,4-alpha-glucan branching enzyme GlgB (759 aa).

The segment at 1–22 (MAKTKGLPKDTAVTPSPHLRPH) is disordered. Residue D422 is the Nucleophile of the active site. E475 (proton donor) is an active-site residue.

It belongs to the glycosyl hydrolase 13 family. GlgB subfamily. Monomer.

It catalyses the reaction Transfers a segment of a (1-&gt;4)-alpha-D-glucan chain to a primary hydroxy group in a similar glucan chain.. It functions in the pathway glycan biosynthesis; glycogen biosynthesis. Catalyzes the formation of the alpha-1,6-glucosidic linkages in glycogen by scission of a 1,4-alpha-linked oligosaccharide from growing alpha-1,4-glucan chains and the subsequent attachment of the oligosaccharide to the alpha-1,6 position. In Mycobacterium sp. (strain KMS), this protein is 1,4-alpha-glucan branching enzyme GlgB.